Consider the following 748-residue polypeptide: Polyribonucleotide nucleotidyltransferase (748 aa).

The Mg(2+) site is built by Asp487 and Asp493. In terms of domain architecture, KH spans 554–613 (PSTTTIKIDKDKIRDIIGPSGKVIKEICETSGAKIDISDDGTVSVYASDRDKLKVALDKI). In terms of domain architecture, S1 motif spans 623–691 (GEIFNGTVVK…NKGKAKLTIK (69 aa)). The segment at 693–733 (ADKDKSSNNTKPKTHVNNTKDNSEPEQRRDSSKKRAWNEDN) is disordered. The segment covering 699–712 (SNNTKPKTHVNNTK) has biased composition (polar residues). A compositionally biased stretch (basic and acidic residues) spans 713–722 (DNSEPEQRRD).

This sequence belongs to the polyribonucleotide nucleotidyltransferase family. It depends on Mg(2+) as a cofactor.

It is found in the cytoplasm. The catalysed reaction is RNA(n+1) + phosphate = RNA(n) + a ribonucleoside 5'-diphosphate. Involved in mRNA degradation. Catalyzes the phosphorolysis of single-stranded polyribonucleotides processively in the 3'- to 5'-direction. The chain is Polyribonucleotide nucleotidyltransferase from Rickettsia peacockii (strain Rustic).